The sequence spans 856 residues: DNA mismatch repair protein MutS (856 aa).

Residue 600–607 (GPNMSGKS) participates in ATP binding.

The protein belongs to the DNA mismatch repair MutS family.

Its function is as follows. This protein is involved in the repair of mismatches in DNA. It is possible that it carries out the mismatch recognition step. This protein has a weak ATPase activity. The sequence is that of DNA mismatch repair protein MutS from Lactobacillus acidophilus (strain ATCC 700396 / NCK56 / N2 / NCFM).